The primary structure comprises 142 residues: Neurofilament heavy polypeptide (142 aa).

One can recognise an IF rod domain in the interval 1–142; sequence MRGAVLRLGA…EAAKVNTDAM (142 aa). Residues 26 to 74 adopt a coiled-coil conformation; the sequence is IAHVRQRLDDEARQRQEAEAAARALARFAQEAEAARVELQKKAQALQEE.

It belongs to the intermediate filament family. Forms heterodimers with NEFL; which can further hetero-oligomerize (in vitro). Forms heterodimers with INA (in vitro). There are a number of repeats of the tripeptide K-S-P, NFH is phosphorylated on a number of the serines in this motif. It is thought that phosphorylation of NFH results in the formation of interfilament cross bridges that are important in the maintenance of axonal caliber. Post-translationally, phosphorylation seems to play a major role in the functioning of the larger neurofilament polypeptides (NF-M and NF-H), the levels of phosphorylation being altered developmentally and coincidentally with a change in the neurofilament function. In terms of processing, phosphorylated in the head and rod regions by the PKC kinase PKN1, leading to the inhibition of polymerization.

Its subcellular location is the cytoplasm. The protein localises to the cytoskeleton. It is found in the cell projection. The protein resides in the axon. Functionally, neurofilaments usually contain three intermediate filament proteins: NEFL, NEFM, and NEFH which are involved in the maintenance of neuronal caliber. NEFH has an important function in mature axons that is not subserved by the two smaller NF proteins. May additionally cooperate with the neuronal intermediate filament proteins PRPH and INA to form neuronal filamentous networks. The polypeptide is Neurofilament heavy polypeptide (NEFH) (Sus scrofa (Pig)).